A 607-amino-acid chain; its full sequence is Branchpoint-bridging protein (607 aa).

Composition is skewed to polar residues over residues 1 to 15 (MSWR…NNIP) and 35 to 45 (VTPSAPSSVTN). 2 disordered regions span residues 1–92 (MSWR…TENK) and 134–155 (VPAD…GRRV). Residues 46-76 (GDRDRDRDGPVYSNDRDVKRGRSPERSEDGP) are compositionally biased toward basic and acidic residues. One can recognise a KH domain in the interval 201–281 (YVPVNDYPEI…EKVNKAKKLI (81 aa)). 2 consecutive CCHC-type zinc fingers follow at residues 319-336 (QACQ…DCPE) and 344-361 (IICR…DCPD). 2 disordered regions span residues 363–390 (QRGA…GGDA) and 407–607 (AAPA…PPGA). The segment covering 373–389 (PGAGRTAGRIGSSGGGD) has biased composition (gly residues). Residues 472–500 (ARDRNERRHDDRDRGDSYYGGDRRHDDYG) are compositionally biased toward basic and acidic residues. Over residues 521–533 (SAPAIPTAPAYPG) the composition is skewed to low complexity. The segment covering 534 to 545 (AYGGYPGYGAPP) has biased composition (gly residues). 2 stretches are compositionally biased toward pro residues: residues 550-563 (APPP…PGAP) and 581-607 (APPP…PPGA).

The protein belongs to the BBP/SF1 family.

It localises to the nucleus. In terms of biological role, necessary for the splicing of pre-mRNA. Has a role in the recognition of the branch site (5'-UACUAAC-3'), the pyrimidine tract and the 3'-splice site at the 3'-end of introns. This Neurospora crassa (strain ATCC 24698 / 74-OR23-1A / CBS 708.71 / DSM 1257 / FGSC 987) protein is Branchpoint-bridging protein (bbp-1).